Here is a 305-residue protein sequence, read N- to C-terminus: MTDRIAAVKTYLLDLQDRICAALEAEDGKARFAEDAWERPAGGGGRTRVIGDGALIEKGGVNFSHVFGDSLPPSASAHRPELAGRGFQALGVSLVIHPENPHVPTSHANVRFFCAEKEGEEPVWWFGGGFDLTPYYAHEEDCVHWHRVARDACAPFGADVYPRYKEWCDRYFHLKHRNEPRGIGGLFFDDLNQWDFDTCFAFIRAIGDAYIDAYLPIVQRRKHTPFDERQREFQAYRRGRYVEFNLVFDRGTLFGLQSGGRTESILMSLPPQVRWGYDWKPEPGSEEARLTEYFLADRDWLAGQP.

Ser93 serves as a coordination point for substrate. A divalent metal cation is bound by residues His97 and His107. Catalysis depends on His107, which acts as the Proton donor. 109-111 provides a ligand contact to substrate; it reads NVR. His146 and His176 together coordinate a divalent metal cation. The tract at residues 241-276 is important for dimerization; that stretch reads YVEFNLVFDRGTLFGLQSGGRTESILMSLPPQVRWG. Residue 259–261 coordinates substrate; sequence GGR.

It belongs to the aerobic coproporphyrinogen-III oxidase family. Homodimer. A divalent metal cation serves as cofactor.

It is found in the cytoplasm. It carries out the reaction coproporphyrinogen III + O2 + 2 H(+) = protoporphyrinogen IX + 2 CO2 + 2 H2O. It functions in the pathway porphyrin-containing compound metabolism; protoporphyrin-IX biosynthesis; protoporphyrinogen-IX from coproporphyrinogen-III (O2 route): step 1/1. Functionally, involved in the heme biosynthesis. Catalyzes the aerobic oxidative decarboxylation of propionate groups of rings A and B of coproporphyrinogen-III to yield the vinyl groups in protoporphyrinogen-IX. In Pseudomonas aeruginosa (strain UCBPP-PA14), this protein is Oxygen-dependent coproporphyrinogen-III oxidase.